The primary structure comprises 134 residues: Small ribosomal subunit protein uS8c (134 aa).

The protein belongs to the universal ribosomal protein uS8 family. As to quaternary structure, part of the 30S ribosomal subunit.

The protein localises to the plastid. Its subcellular location is the chloroplast. Its function is as follows. One of the primary rRNA binding proteins, it binds directly to 16S rRNA central domain where it helps coordinate assembly of the platform of the 30S subunit. This chain is Small ribosomal subunit protein uS8c (rps8), found in Arabis hirsuta (Hairy rock-cress).